The sequence spans 901 residues: Protein translocase subunit SecA (901 aa).

Residues Q87, 105–109, and D512 each bind ATP; that span reads GEGKT. A disordered region spans residues 868-901; the sequence is AALAAQTGERKVGRNDPCPCGSGKKYKQCHGRLQ. Zn(2+) contacts are provided by C885, C887, C896, and H897. A compositionally biased stretch (basic residues) spans 891 to 901; the sequence is KKYKQCHGRLQ.

This sequence belongs to the SecA family. As to quaternary structure, monomer and homodimer. Part of the essential Sec protein translocation apparatus which comprises SecA, SecYEG and auxiliary proteins SecDF-YajC and YidC. Requires Zn(2+) as cofactor.

The protein localises to the cell inner membrane. It localises to the cytoplasm. The catalysed reaction is ATP + H2O + cellular proteinSide 1 = ADP + phosphate + cellular proteinSide 2.. Its function is as follows. Part of the Sec protein translocase complex. Interacts with the SecYEG preprotein conducting channel. Has a central role in coupling the hydrolysis of ATP to the transfer of proteins into and across the cell membrane, serving both as a receptor for the preprotein-SecB complex and as an ATP-driven molecular motor driving the stepwise translocation of polypeptide chains across the membrane. The chain is Protein translocase subunit SecA from Escherichia coli O45:K1 (strain S88 / ExPEC).